We begin with the raw amino-acid sequence, 173 residues long: Protein-export protein SecB (173 aa).

This sequence belongs to the SecB family. As to quaternary structure, homotetramer, a dimer of dimers. One homotetramer interacts with 1 SecA dimer.

It localises to the cytoplasm. In terms of biological role, one of the proteins required for the normal export of preproteins out of the cell cytoplasm. It is a molecular chaperone that binds to a subset of precursor proteins, maintaining them in a translocation-competent state. It also specifically binds to its receptor SecA. The protein is Protein-export protein SecB of Ralstonia nicotianae (strain ATCC BAA-1114 / GMI1000) (Ralstonia solanacearum).